We begin with the raw amino-acid sequence, 297 residues long: Ribosomal RNA small subunit methyltransferase H (297 aa).

S-adenosyl-L-methionine is bound by residues 35–37 (GGH), Asp-55, Phe-82, Asp-100, and Gln-107.

It belongs to the methyltransferase superfamily. RsmH family.

The protein resides in the cytoplasm. The catalysed reaction is cytidine(1402) in 16S rRNA + S-adenosyl-L-methionine = N(4)-methylcytidine(1402) in 16S rRNA + S-adenosyl-L-homocysteine + H(+). Its function is as follows. Specifically methylates the N4 position of cytidine in position 1402 (C1402) of 16S rRNA. The chain is Ribosomal RNA small subunit methyltransferase H from Chlamydia caviae (strain ATCC VR-813 / DSM 19441 / 03DC25 / GPIC) (Chlamydophila caviae).